The primary structure comprises 459 residues: MLKIHNSLTGAKEPFQPIEPGQVRIYVCGMTVYDFCHLGHARALVVFDAVVRYLRWLGYEVTYVRNITDIDDKIIRRAAENGEPMTALTDRFIRAMHEDCSALGVEPPDHEPRATERLESMIALIEELIAGGHAYVGDNGDVYFSVASFPEYGKLSGRRVEELRSGSRIEPDEAKHDPVDFVLWKAAKSGEPAWPSPWGDGRPGWHIECSAMSRDLLGSHFDIHGGGVDLQFPHHENEIAQSECASGHRFVNYWMHNGHVRIDDEKMAKSLGNFFTVRDVLAEHPAEVVRLFLLSSHYRSPLNYTGDALDEARGGLERLYNALRGLPAAAPARSQARERFREAMDDDFNTREALAVLFDGAREINRLREAGDASGAASAAAELRELGAVLGLLQQDPEAYLRGDVADAEAEEIESLVAQRTAARKAKDFAEADRIRDELQARGIELEDTPEGTKWRRTR.

Cys28 contributes to the Zn(2+) binding site. Residues 30-40 (MTVYDFCHLGH) carry the 'HIGH' region motif. Cys209, His234, and Glu238 together coordinate Zn(2+). A 'KMSKS' region motif is present at residues 266–270 (KMAKS). Position 269 (Lys269) interacts with ATP. Residues 440 to 459 (QARGIELEDTPEGTKWRRTR) are disordered.

This sequence belongs to the class-I aminoacyl-tRNA synthetase family. Monomer. Requires Zn(2+) as cofactor.

It localises to the cytoplasm. It carries out the reaction tRNA(Cys) + L-cysteine + ATP = L-cysteinyl-tRNA(Cys) + AMP + diphosphate. In Halorhodospira halophila (strain DSM 244 / SL1) (Ectothiorhodospira halophila (strain DSM 244 / SL1)), this protein is Cysteine--tRNA ligase.